A 2363-amino-acid polypeptide reads, in one-letter code: Highly reducing polyketide synthase cnsI (2363 aa).

Residues 14-440 (PEPIAIIGMS…GSNAHAIVES (427 aa)) form the Ketosynthase family 3 (KS3) domain. Residues Cys187, His322, and His363 each act as for beta-ketoacyl synthase activity in the active site. Residues 546–854 (LAFVFTGQGA…FLQVLKSINA (309 aa)) form a malonyl-CoA:ACP transacylase (MAT) domain region. Ser638 functions as the For malonyltransferase activity in the catalytic mechanism. Residues 938–1068 (HDLLGSPMDF…GTFTLHYDAR (131 aa)) are N-terminal hotdog fold. The interval 938–1224 (HDLLGSPMDF…RLDSIASDVS (287 aa)) is dehydratase (DH) domain. The PKS/mFAS DH domain occupies 938–1246 (HDLLGSPMDF…LGPVPMSKVP (309 aa)). Residue His970 is the Proton acceptor; for dehydratase activity of the active site. A C-terminal hotdog fold region spans residues 1089 to 1246 (TAECETNRDA…LGPVPMSKVP (158 aa)). Asp1159 serves as the catalytic Proton donor; for dehydratase activity. Residues 1669–1976 (GGQWVEDRQL…ARQTGISVAI (308 aa)) are enoylreductase (ER) domain. The tract at residues 2001–2177 (TYLLAGGLGM…PGHSIDIGLV (177 aa)) is catalytic ketoreductase (KRc) domain. The Carrier domain occupies 2279 to 2357 (EDASYVVNQA…VLSEKIAAQS (79 aa)). The residue at position 2317 (Ser2317) is an O-(pantetheine 4'-phosphoryl)serine.

It functions in the pathway alkaloid biosynthesis. Its function is as follows. Highly reducing polyketide synthase; part of the gene cluster that mediates the biosynthesis of communesins, a prominent class of indole alkaloids with great potential as pharmaceuticals. Communesins are biosynthesized by the coupling of tryptamine and aurantioclavine, two building blocks derived from L-tryptophan. The L-tryptophan decarboxylase cnsB converts L-tryptophan to tryptamine, whereas the tryptophan dimethylallyltransferase cnsF converts L-tryptophan to 4-dimethylallyl tryptophan which is further transformed to aurantioclavine by the aurantioclavine synthase cnsA, probably aided by the catalase cnsD. The cytochrome P450 monooxygenase cnsC catalyzes the heterodimeric coupling between the two different indole moieties, tryptamine and aurantioclavine, to construct vicinal quaternary stereocenters and yield the heptacyclic communesin scaffold. The O-methyltransferase cnsE then methylates the communesin scaffold to produce communesin K, the simplest characterized communesin that contains the heptacyclic core. The dioxygenase cnsJ converts communesin K into communesin I. Acylation to introduce the hexadienyl group at position N16 of communesin I by the acyltransferase cnsK leads to the production of communesin B. The hexadienyl group is produced by the highly reducing polyketide synthase cnsI, before being hydrolytically removed from cnsI by the serine hydrolase cnsH, converted into hexadienyl-CoA by the CoA ligase cnsG, and then transferred to communesin I by cnsK. Surprisingly, cnsK may also be a promiscuous acyltransferase that can tolerate a range of acyl groups, including acetyl-, propionyl-, and butyryl-CoA, which lead to communesins A, G and H respectively. The roles of the alpha-ketoglutarate-dependent dioxygenases cnsM and cnsP have still to be determined. The polypeptide is Highly reducing polyketide synthase cnsI (Penicillium expansum (Blue mold rot fungus)).